Consider the following 1377-residue polypeptide: DNA-directed RNA polymerase subunit beta' (1377 aa).

4 residues coordinate Zn(2+): C60, C62, C75, and C78. Mg(2+)-binding residues include D449, D451, and D453. Positions 777, 851, 858, and 861 each coordinate Zn(2+).

This sequence belongs to the RNA polymerase beta' chain family. In terms of assembly, the RNAP catalytic core consists of 2 alpha, 1 beta, 1 beta' and 1 omega subunit. When a sigma factor is associated with the core the holoenzyme is formed, which can initiate transcription. Mg(2+) serves as cofactor. The cofactor is Zn(2+).

The catalysed reaction is RNA(n) + a ribonucleoside 5'-triphosphate = RNA(n+1) + diphosphate. In terms of biological role, DNA-dependent RNA polymerase catalyzes the transcription of DNA into RNA using the four ribonucleoside triphosphates as substrates. This chain is DNA-directed RNA polymerase subunit beta', found in Borreliella afzelii (strain PKo) (Borrelia afzelii).